The following is a 418-amino-acid chain: MVDALDSKSSAFGHVGSSPTAPTAVMGTYKRFPVTLLRGKGCWVWDDHGHQYLDAVAGIATCALGHSDRALRRSLGQQLKQLQHVSNLYRIPEQEALAHWLVENSCADSVFFCNSGAEANEAAIKLARKHGHRRRGIDRPIILTANSSFHGRTLAAISATGQPNFHKGFEPMVEGFEFFPFNNLQAFEQQLNRLEAQGPSVAAVLIEPLQGEGGVNPGEAGFFRRLRELCSQHQILLIFDEVQVGMGRCGNWWGYQQLGIEPDAFTLAKGLGGGHAIGALLVKQHADLFEPGDHASTFGGNPFACKAALTVAKEIERRGLIAKVQQRGAQLREGLTDLVQRFPRQLKGVRGWGLLQGLVLQDESTFTAPNVAQAALEEKLLVIAAGPKVVRMVPPLIIKPSEIRQLLQRLEATLAHFR.

Pyridoxal 5'-phosphate-binding positions include 116 to 117 and Phe149; that span reads GA. Residue Arg152 coordinates N(2)-acetyl-L-ornithine. 240–243 provides a ligand contact to pyridoxal 5'-phosphate; sequence DEVQ. N6-(pyridoxal phosphate)lysine is present on Lys269. A N(2)-acetyl-L-ornithine-binding site is contributed by Ser296. Thr297 contacts pyridoxal 5'-phosphate.

Belongs to the class-III pyridoxal-phosphate-dependent aminotransferase family. ArgD subfamily. In terms of assembly, homodimer. Pyridoxal 5'-phosphate is required as a cofactor.

Its subcellular location is the cytoplasm. It carries out the reaction N(2)-acetyl-L-ornithine + 2-oxoglutarate = N-acetyl-L-glutamate 5-semialdehyde + L-glutamate. It functions in the pathway amino-acid biosynthesis; L-arginine biosynthesis; N(2)-acetyl-L-ornithine from L-glutamate: step 4/4. In Prochlorococcus marinus (strain MIT 9313), this protein is Acetylornithine aminotransferase.